The primary structure comprises 544 residues: Coiled-coil domain-containing protein 82 (544 aa).

The segment covering 1–14 (MIHVRRHETRRNSK) has biased composition (basic residues). The tract at residues 1-294 (MIHVRRHETR…ESDEDGDDYI (294 aa)) is disordered. The segment covering 16-27 (HVPEQKSRVDWR) has biased composition (basic and acidic residues). A compositionally biased stretch (acidic residues) spans 39-67 (DSDEELDSEEFDSDEELDSDESFENDEEL). 5 positions are modified to phosphoserine: Ser88, Ser131, Ser154, Ser195, and Ser219. Positions 88 to 108 (SKIQSEGNDSKCLINSGNGST) are enriched in polar residues. The segment covering 112–132 (ETNKIKHRNIDLQDQEKHLSQ) has biased composition (basic and acidic residues). Basic and acidic residues predominate over residues 223–248 (MEQKTPEKTLAAQKREKLQKLKELSK). Thr227 bears the Phosphothreonine mark. Residues 229-256 (EKTLAAQKREKLQKLKELSKQRSRQRRS) are a coiled coil. Residues 273–294 (DEVDEEEEEDNYESDEDGDDYI) are compositionally biased toward acidic residues. Position 329 is a phosphoserine (Ser329).

This is Coiled-coil domain-containing protein 82 (CCDC82) from Homo sapiens (Human).